A 177-amino-acid chain; its full sequence is Adenine phosphoribosyltransferase (177 aa).

The protein belongs to the purine/pyrimidine phosphoribosyltransferase family. In terms of assembly, homodimer.

Its subcellular location is the cytoplasm. It catalyses the reaction AMP + diphosphate = 5-phospho-alpha-D-ribose 1-diphosphate + adenine. It participates in purine metabolism; AMP biosynthesis via salvage pathway; AMP from adenine: step 1/1. In terms of biological role, catalyzes a salvage reaction resulting in the formation of AMP, that is energically less costly than de novo synthesis. The polypeptide is Adenine phosphoribosyltransferase (Rhodococcus opacus (strain B4)).